We begin with the raw amino-acid sequence, 375 residues long: CLIP domain-containing serine protease B14 (375 aa).

Positions 1–24 (MYSRRYVACGLLCLLVIAIDQGHG) are cleaved as a signal peptide. The Clip domain occupies 29-83 (PCTTPNGTAGRCVRVRECGYVLDLLRKDLFAHSDTVHLEGLQCGTRPDGGALVCC). 3 disulfide bridges follow: cysteine 30–cysteine 82, cysteine 40–cysteine 71, and cysteine 46–cysteine 83. Asparagine 34 is a glycosylation site (N-linked (GlcNAc...) asparagine). Residues 101-370 (IIGGNDTELG…YMGWLEREMF (270 aa)) enclose the Peptidase S1 domain. Asparagine 105 carries an N-linked (GlcNAc...) asparagine glycan. Cysteine 131 and cysteine 147 form a disulfide bridge. Catalysis depends on charge relay system residues histidine 146 and aspartate 213. A glycan (N-linked (GlcNAc...) asparagine) is linked at asparagine 238. 2 cysteine pairs are disulfide-bonded: cysteine 289–cysteine 307 and cysteine 317–cysteine 346. Residue serine 321 is the Charge relay system of the active site. A glycan (N-linked (GlcNAc...) asparagine) is linked at asparagine 357.

This sequence belongs to the peptidase S1 family. CLIP subfamily. N-glycosylated. In terms of processing, proteolytically cleaved. As to expression, expressed by a subpopulation of hemocytes.

The protein localises to the secreted. Its function is as follows. Serine protease. Plays a role in innate immunity against infections by parasite P.berghei and by Gram-negative bacteria such as E.coli. In response to P.berghei infection, contributes to the clearing of parasite ookinetes independent of melanization, an innate immune response which consists in the deposition of melanin pigments on invading pathogens and parasites. May play a role in non-septic wound healing. This Anopheles gambiae (African malaria mosquito) protein is CLIP domain-containing serine protease B14.